The sequence spans 216 residues: Somatotropin (216 aa).

The first 26 residues, 1–26 (MAADPQSSVLLAFALLCLPWPQEVGA), serve as a signal peptide directing secretion. H45 contacts Zn(2+). Cysteines 78 and 189 form a disulfide. The residue at position 131 (S131) is a Phosphoserine. A Zn(2+)-binding site is contributed by E198. Residues C206 and C214 are joined by a disulfide bond.

The protein belongs to the somatotropin/prolactin family.

It is found in the secreted. Its function is as follows. Plays an important role in growth control. Its major role in stimulating body growth is to stimulate the liver and other tissues to secrete IGF1. It stimulates both the differentiation and proliferation of myoblasts. It also stimulates amino acid uptake and protein synthesis in muscle and other tissues. The protein is Somatotropin (GH1) of Ailuropoda melanoleuca (Giant panda).